We begin with the raw amino-acid sequence, 493 residues long: UDP-N-acetylmuramate--L-alanine ligase (493 aa).

126–132 (GTHGKTT) serves as a coordination point for ATP.

The protein belongs to the MurCDEF family.

The protein localises to the cytoplasm. It catalyses the reaction UDP-N-acetyl-alpha-D-muramate + L-alanine + ATP = UDP-N-acetyl-alpha-D-muramoyl-L-alanine + ADP + phosphate + H(+). It functions in the pathway cell wall biogenesis; peptidoglycan biosynthesis. Its function is as follows. Cell wall formation. The polypeptide is UDP-N-acetylmuramate--L-alanine ligase (Hamiltonella defensa subsp. Acyrthosiphon pisum (strain 5AT)).